A 269-amino-acid polypeptide reads, in one-letter code: Shikimate dehydrogenase (NADP(+)) (269 aa).

Shikimate is bound by residues 15–17 (SLS) and T62. Catalysis depends on K66, which acts as the Proton acceptor. Residues N86 and D99 each contribute to the shikimate site. NADP(+) is bound by residues 123-127 (GAGGA), 146-151 (NRTTAK), and L213. Y215 provides a ligand contact to shikimate. G236 contacts NADP(+).

This sequence belongs to the shikimate dehydrogenase family. In terms of assembly, homodimer.

The catalysed reaction is shikimate + NADP(+) = 3-dehydroshikimate + NADPH + H(+). It participates in metabolic intermediate biosynthesis; chorismate biosynthesis; chorismate from D-erythrose 4-phosphate and phosphoenolpyruvate: step 4/7. Its function is as follows. Involved in the biosynthesis of the chorismate, which leads to the biosynthesis of aromatic amino acids. Catalyzes the reversible NADPH linked reduction of 3-dehydroshikimate (DHSA) to yield shikimate (SA). This chain is Shikimate dehydrogenase (NADP(+)), found in Methanocella arvoryzae (strain DSM 22066 / NBRC 105507 / MRE50).